A 202-amino-acid polypeptide reads, in one-letter code: Small ribosomal subunit protein uS4c (202 aa).

In terms of domain architecture, S4 RNA-binding spans 90–150 (MRLDNVIFRL…NQRKSQAIIN (61 aa)).

Belongs to the universal ribosomal protein uS4 family. Part of the 30S ribosomal subunit. Contacts protein S5. The interaction surface between S4 and S5 is involved in control of translational fidelity.

Its subcellular location is the plastid. The protein localises to the chloroplast. Its function is as follows. One of the primary rRNA binding proteins, it binds directly to 16S rRNA where it nucleates assembly of the body of the 30S subunit. Functionally, with S5 and S12 plays an important role in translational accuracy. The chain is Small ribosomal subunit protein uS4c (rps4) from Canalohypopterygium tamariscinum (Moss).